A 239-amino-acid chain; its full sequence is MSDTHDMTALVLFSGGQDSTTCLAWALDRFARIETIGFDYGQRHAIELDCRARLLDGLAQLRPEWAGKLGDGHTLEIPTLSAISETALTRDVAIEMGADGLPNTFVPGRNLVFLTFAAALAYRRGISHIVGGMCETDYSGYPDCRDETIKALQGALSLGMARPFELHTPLMWLSKAATWQLAYDLGGRDLVDLIRDQSHTCYLGERGARHDWGYGCGACPACDLRARGWHEYIAGSAQS.

13 to 23 contacts ATP; sequence FSGGQDSTTCL. Zn(2+) contacts are provided by Cys-201, Cys-216, Cys-219, and Cys-222.

Belongs to the QueC family. It depends on Zn(2+) as a cofactor.

It catalyses the reaction 7-carboxy-7-deazaguanine + NH4(+) + ATP = 7-cyano-7-deazaguanine + ADP + phosphate + H2O + H(+). It functions in the pathway purine metabolism; 7-cyano-7-deazaguanine biosynthesis. In terms of biological role, catalyzes the ATP-dependent conversion of 7-carboxy-7-deazaguanine (CDG) to 7-cyano-7-deazaguanine (preQ(0)). In Bradyrhizobium sp. (strain BTAi1 / ATCC BAA-1182), this protein is 7-cyano-7-deazaguanine synthase.